A 367-amino-acid polypeptide reads, in one-letter code: Nodulation protein 10 (367 aa).

A run of 11 helical transmembrane segments spans residues 15–37 (FDLL…WLHL), 46–66 (VFDL…SGFL), 88–108 (IFPA…VTGG), 109–129 (LNVT…LTAA), 155–175 (VLWT…LLEI), 183–203 (GALV…HFNI), 208–228 (NPFL…GVLA), 245–265 (WWLA…AAFI), 270–290 (AAPV…SAAH), 312–332 (MLVM…LWIV), and 335–355 (VGTV…AMKL).

This sequence belongs to the acyltransferase 3 family.

Its subcellular location is the cell membrane. Functionally, not known. NodX allows Rhizobium leguminosarum biovar viciae strain TOM to nodulate Afghanistan peas. The chain is Nodulation protein 10 (nodX) from Rhizobium leguminosarum bv. viciae.